Reading from the N-terminus, the 319-residue chain is Cell surface A33 antigen (319 aa).

The first 21 residues, 1–21 (MLGKAGSVVWMLCAIWVAADA), serve as a signal peptide directing secretion. An Ig-like V-type domain is found at 22 to 134 (LTVETTQDIL…QDVNAKSRVR (113 aa)). Residues 22–235 (LTVETTQDIL…VAPRPPSMNI (214 aa)) lie on the Extracellular side of the membrane. 3 disulfide bridges follow: Cys-43-Cys-117, Cys-146-Cys-222, and Cys-162-Cys-211. N-linked (GlcNAc...) asparagine glycans are attached at residues Asn-99, Asn-112, Asn-200, and Asn-223. Positions 140–227 (PPSKPDCSIQ…GIESCNITVA (88 aa)) constitute an Ig-like C2-type domain. A helical membrane pass occupies residues 236–256 (ALYAGIAGGVFVALIIIGVIV). Over 257–319 (YCCCCREKDD…GRSTPDQPFQ (63 aa)) the chain is Cytoplasmic. Composition is skewed to basic and acidic residues over residues 267–276 (KDQDREDARP) and 284–308 (PKKE…DRWS). Residues 267-319 (KDQDREDARPNRAAYQVPKKEQKEISRGREDEDDHRHEDRWSSGRSTPDQPFQ) are disordered. A compositionally biased stretch (polar residues) spans 309–319 (SGRSTPDQPFQ).

Post-translationally, palmitoylated.

Its subcellular location is the membrane. In terms of biological role, may play a role in cell-cell recognition and signaling. This chain is Cell surface A33 antigen (Gpa33), found in Mus musculus (Mouse).